The primary structure comprises 359 residues: TGACG-sequence-specific DNA-binding protein TGA-1A (359 aa).

Residues 44–54 are compositionally biased toward basic and acidic residues; it reads KRLDNETEDTS. The tract at residues 44 to 72 is disordered; sequence KRLDNETEDTSHGTVGTSNRYEPETSKPV. A bZIP domain is found at 72–135; the sequence is VEKVLRRLAQ…GGVDASQLSY (64 aa). A coiled-coil region spans residues 73–125; sequence EKVLRRLAQNREAARKSRLRKKAYVQQLENSKLKLIQLEQELERARKQGMCVG. A basic motif region spans residues 74 to 94; the sequence is KVLRRLAQNREAARKSRLRKK. Residues 100–114 are leucine-zipper; that stretch reads LENSKLKLIQLEQEL. In terms of domain architecture, DOG1 spans 143–354; it reads TAVFDMEYGH…RVLSSQWATR (212 aa).

Belongs to the bZIP family. Binds DNA as a dimer.

It is found in the nucleus. Functionally, transcriptional activator that binds specifically to the DNA sequence 5'-TGACG-3'. Recognizes ocs elements like the as-1 motif of the cauliflower mosaic virus 35S promoter. Binding to the as-1-like cis elements mediate auxin- and salicylic acid-inducible transcription. Could also bind to the Hex-motif (5'-TGACGTGG-3') another cis-acting element found in plant histone promoters. The chain is TGACG-sequence-specific DNA-binding protein TGA-1A (TGA1A) from Nicotiana tabacum (Common tobacco).